We begin with the raw amino-acid sequence, 351 residues long: MTIKVLVVDDSALIRNLLGQMIEADSELSLVGMAADAYMAKDMVNQHRPDVITLDIEMPKVDGLTFLDRLMKARPTAVVMISSLTEEGADATFNALALGAVDFIPKPKLDSPQDFNEYQDLILEKIKSAAHAKLKTQRAAPAVVVQPSHKPALSSRVINTQLVAIGASTGGTEAILSLLQQFPAVMPPIVITQHMPPGFTRTFAERLNKLTRLNVKQAEDGERLLPCYVYIAPGDQHLEVIKVGGSFKTRLTQGDKVSGHRPSVDVLFNSVAECAGANTTAAILTGMGKDGADGMALIDEQGGKTFAQGEQSCVVFGMPREAIKRGVIHHVVELPQLADKMLNYLASLKRD.

The Response regulatory domain occupies 4–121; sequence KVLVVDDSAL…PQDFNEYQDL (118 aa). A 4-aspartylphosphate modification is found at D55. A CheB-type methylesterase domain is found at 156–348; the sequence is RVINTQLVAI…DKMLNYLASL (193 aa). Catalysis depends on residues S168, H194, and D290.

The protein belongs to the CheB family. Phosphorylated by CheA. Phosphorylation of the N-terminal regulatory domain activates the methylesterase activity.

It localises to the cytoplasm. It catalyses the reaction [protein]-L-glutamate 5-O-methyl ester + H2O = L-glutamyl-[protein] + methanol + H(+). The catalysed reaction is L-glutaminyl-[protein] + H2O = L-glutamyl-[protein] + NH4(+). Functionally, involved in chemotaxis. Part of a chemotaxis signal transduction system that modulates chemotaxis in response to various stimuli. Catalyzes the demethylation of specific methylglutamate residues introduced into the chemoreceptors (methyl-accepting chemotaxis proteins or MCP) by CheR. Also mediates the irreversible deamidation of specific glutamine residues to glutamic acid. The chain is Protein-glutamate methylesterase/protein-glutamine glutaminase 2 from Shewanella sp. (strain MR-4).